A 270-amino-acid chain; its full sequence is Large ribosomal subunit protein uL2c (270 aa).

Positions N221–W245 are disordered.

It belongs to the universal ribosomal protein uL2 family. In terms of assembly, part of the 50S ribosomal subunit.

The protein localises to the plastid. The chain is Large ribosomal subunit protein uL2c (rpl2) from Cuscuta gronovii (Common dodder).